The following is a 1276-amino-acid chain: Sterol regulatory element-binding protein cleavage-activating protein (1276 aa).

Over 1-18 (MTLTERLREKISQAFYNH) the chain is Cytoplasmic. A helical membrane pass occupies residues 19 to 39 (GLLCASYPIPIILFTGLCILA). Topologically, residues 40–279 (CCYPLLKLPL…NLVHVHFKEE (240 aa)) are lumenal. Residues 46-284 (KLPLPGTGPV…HFKEEIGIAE (239 aa)) form a loop-1 region. The tract at residues 60–81 (PVKGYSPPPADSDHKQGEPSEQ) is disordered. A glycan (N-linked (GlcNAc...) asparagine) is linked at N263. Residues 280-300 (IGIAELIPLVTTYIILFAYIY) form a helical membrane-spanning segment. In terms of domain architecture, SSD spans 284–442 (ELIPLVTTYI…MLFFTTVLSI (159 aa)). Over 301–312 (FSTRKIDMVKSK) the chain is Cytoplasmic. Residues 313–333 (WGLALAAVVTVLSSLLMSVGL) form a helical membrane-spanning segment. Over 334–344 (CTLFGLTPTLN) the chain is Lumenal. Residues 345–365 (GGEIFPYLVVVIGLENVLVLT) traverse the membrane as a helical segment. The Cytoplasmic portion of the chain corresponds to 366–401 (KSVVSTPVDLEVKLRIAQGLSSESWSIMKNVATELG). Residues 402 to 422 (IILIGYFTLVPAIQEFCLFAV) form a helical membrane-spanning segment. A topological domain (lumenal) is located at residue V423. A helical transmembrane segment spans residues 424–444 (GLVSDFFLQMLFFTTVLSIDI). The Cytoplasmic segment spans residues 445–518 (RRMELADLNK…FLARTRLAQR (74 aa)). The short motif at 447–452 (MELADL) is the ER export signal element. Glycyl lysine isopeptide (Lys-Gly) (interchain with G-Cter in ubiquitin) cross-links involve residues K454 and K466. The helical transmembrane segment at 519–539 (LIMAGTVVWIGILVYTDPAGL) threads the bilayer. Residues 535-710 (DPAGLRTYLA…QTHGDITLYK (176 aa)) form a loop-7 region. The Lumenal portion of the chain corresponds to 540–707 (RTYLAAQVTE…GGTQTHGDIT (168 aa)). N-linked (GlcNAc...) asparagine glycans are attached at residues N590 and N641. The chain crosses the membrane as a helical span at residues 708 to 728 (LYKVAALGLAAGIVLVLLLLC). Residues 729–1276 (LYRVLCPRNY…YVPSVLEKLD (548 aa)) lie on the Cytoplasmic side of the membrane. An interaction with SREBF2 region spans residues 731-1276 (RVLCPRNYGQ…YVPSVLEKLD (546 aa)). The stretch at 771 to 811 (VLRGHLMDIECLASDGMLLVSCCLAGQVCVWDAQTGDCLTR) is one WD 1 repeat. Residues S821, S837, S843, S850, S905, and S934 each carry the phosphoserine modification. The interval 834 to 903 (ERLSDGGKAS…RHRAGCGRSR (70 aa)) is disordered. Positions 928–958 (SALRPPSPGPPLPQASQEEGTAPEKGSPPLA) are disordered. WD repeat units follow at residues 949–999 (APEK…LCCS) and 1002–1039 (EISS…SLSP). The residue at position 1048 (R1048) is an Omega-N-methylarginine. WD repeat units lie at residues 1074–1111 (AHQK…CLFT), 1114–1152 (GHSG…RVSH), 1155–1192 (AHRG…KLYS), and 1194–1232 (QQDL…LLQT).

This sequence belongs to the WD repeat SCAP family. Membrane region forms a homotetramer. Component of the SCAP-SREBP complex (composed of SCAP and SREBF1/SREBP1 or SREBF2/SREBP2); interacts with SREBF1/SREBP1 or SREBF2/SREBP2 through its C-terminal cytoplasmic domain. Forms a ternary complex with INSIG1 or INSIG2 through its transmembrane domains at high sterol concentrations. Interacts with PAQR3; the interaction anchors the SCAP-SREBP complex to the Golgi apparatus in low cholesterol conditions. Interacts with the SEC23-SEC24 complex in a SAR1-GTP-dependent manner through an ER export signal in its third cytoplasmic loop. Interacts with RNF139; the interaction inhibits the interaction of SCAP with SEC24B and hampering the ER to Golgi transport of the SCAP-SREBP complex. Interacts with SPRING1. Ubiquitinated at Lys-454 and Lys-466. RNF145 triggers ubiquitination of SCAP, likely inhibiting SCAP-SREBP complex transport to the Golgi apparatus and the subsequent processing/maturation of SREBF2/SREBP2.

The protein resides in the endoplasmic reticulum membrane. The protein localises to the golgi apparatus membrane. It is found in the cytoplasmic vesicle. Its subcellular location is the COPII-coated vesicle membrane. In terms of biological role, escort protein required for cholesterol as well as lipid homeostasis. Regulates export of the SCAP-SREBP complex from the endoplasmic reticulum to the Golgi upon low cholesterol, thereby regulating the processing of sterol regulatory element-binding proteins (SREBPs) SREBF1/SREBP1 and SREBF2/SREBP2. At high sterol concentrations, formation of a ternary complex with INSIG (INSIG1 or INSIG2) leads to mask the ER export signal in SCAP, promoting retention of the complex in the endoplasmic reticulum. Low sterol concentrations trigger release of INSIG, a conformational change in the SSD domain of SCAP, unmasking of the ER export signal, promoting recruitment into COPII-coated vesicles and transport of the SCAP-SREBP to the Golgi: in the Golgi, SREBPs are then processed, releasing the transcription factor fragment of SREBPs from the membrane, its import into the nucleus and up-regulation of LDLR, INSIG1 and the mevalonate pathway. Binds cholesterol via its SSD domain. The polypeptide is Sterol regulatory element-binding protein cleavage-activating protein (Rattus norvegicus (Rat)).